A 1726-amino-acid chain; its full sequence is Protein Shroom2 (1726 aa).

A PDZ domain is found at 79–159 (AGGCYSYWRG…ILKMIVKRRN (81 aa)). Disordered stretches follow at residues 294 to 373 (DNTK…RSDS), 425 to 451 (RTVA…LSPY), 657 to 676 (FSQL…DYSW), and 697 to 785 (EGRN…STYR). Over residues 318–328 (VLQSTSINETS) the composition is skewed to polar residues. Residues 329–338 (KIQRTEDNTE) show a composition bias toward basic and acidic residues. Residues 657 to 667 (FSQLDHSEKGS) are compositionally biased toward basic and acidic residues. 2 stretches are compositionally biased toward polar residues: residues 746 to 755 (SKSTAALTES) and 769 to 785 (LESM…STYR). The ASD1 domain maps to 788–877 (LQEAQARVLR…SEPEKINEVG (90 aa)). Disordered stretches follow at residues 913–968 (PKVP…DKVT), 1007–1080 (LDAD…QCGA), 1092–1120 (KWKP…GTLP), 1166–1240 (FKKR…KNPS), 1269–1299 (SSKS…DKPP), and 1471–1499 (AQQR…VPSA). The segment covering 917 to 926 (PKVVSSSQSE) has biased composition (low complexity). Over residues 936-948 (DYAKSSEGQESKR) the composition is skewed to basic and acidic residues. 2 stretches are compositionally biased toward polar residues: residues 1054 to 1070 (NSNS…SPTR) and 1104 to 1119 (ETSN…SGTL). Low complexity predominate over residues 1191-1205 (SSSSLATSSESLLTA). Positions 1209-1235 (RAQSYSPSSQDTFPPQSLQKQSPSTYP) are enriched in polar residues. An ASD2 domain is found at 1427–1721 (EELVREIVDK…QLKCLTDSLP (295 aa)).

This sequence belongs to the shroom family. As to quaternary structure, interacts with F-actin.

The protein localises to the apical cell membrane. It is found in the cell junction. Its subcellular location is the tight junction. The protein resides in the cytoplasm. It localises to the cytoskeleton. May be involved in endothelial cell morphology changes during cell spreading. Required for eye pigmentation. In the retinal pigment epithelium, regulates the biogenesis of melanosomes and promotes their association with the apical cell surface by inducing gamma-tubulin redistribution. The chain is Protein Shroom2 (shroom2) from Xenopus tropicalis (Western clawed frog).